The following is a 447-amino-acid chain: Succinate--CoA ligase [ADP-forming] subunit beta, mitochondrial (447 aa).

Residues 1 to 34 constitute a mitochondrion transit peptide; that stretch reads MFKLGRNRALASAFAATSRAPLASRLPSVSQQQR. The ATP-grasp domain occupies 45 to 287; it reads ADLLRQYGIG…TTQEDPDEVR (243 aa). ATP is bound by residues Lys82, 89-91, and Glu150; that span reads GRG. 2 residues coordinate Mg(2+): Asn242 and Asp256. Residues Asn307 and 364–366 contribute to the substrate site; that span reads GIV.

This sequence belongs to the succinate/malate CoA ligase beta subunit family. Heterodimer of an alpha and a beta subunit. Mg(2+) is required as a cofactor.

Its subcellular location is the mitochondrion. The catalysed reaction is succinate + ATP + CoA = succinyl-CoA + ADP + phosphate. Its pathway is carbohydrate metabolism; tricarboxylic acid cycle; succinate from succinyl-CoA (ligase route): step 1/1. Functionally, succinyl-CoA synthetase functions in the citric acid cycle (TCA), coupling the hydrolysis of succinyl-CoA to the synthesis of ATP and thus represents the only step of substrate-level phosphorylation in the TCA. The beta subunit provides nucleotide specificity of the enzyme and binds the substrate succinate, while the binding sites for coenzyme A and phosphate are found in the alpha subunit. The sequence is that of Succinate--CoA ligase [ADP-forming] subunit beta, mitochondrial from Neurospora crassa (strain ATCC 24698 / 74-OR23-1A / CBS 708.71 / DSM 1257 / FGSC 987).